A 458-amino-acid polypeptide reads, in one-letter code: UDP-N-acetylmuramoylalanine--D-glutamate ligase (458 aa).

124–130 is a binding site for ATP; sequence GSDGKTT.

It belongs to the MurCDEF family.

It localises to the cytoplasm. It carries out the reaction UDP-N-acetyl-alpha-D-muramoyl-L-alanine + D-glutamate + ATP = UDP-N-acetyl-alpha-D-muramoyl-L-alanyl-D-glutamate + ADP + phosphate + H(+). Its pathway is cell wall biogenesis; peptidoglycan biosynthesis. In terms of biological role, cell wall formation. Catalyzes the addition of glutamate to the nucleotide precursor UDP-N-acetylmuramoyl-L-alanine (UMA). The sequence is that of UDP-N-acetylmuramoylalanine--D-glutamate ligase from Clostridium botulinum (strain Alaska E43 / Type E3).